The following is a 253-amino-acid chain: Thiamine import ATP-binding protein ThiQ (253 aa).

The 229-residue stretch at 8–236 folds into the ABC transporter domain; it reads VRLDKVSFSY…AGPEAFRRYI (229 aa). 38-45 contributes to the ATP binding site; that stretch reads GPSGSGKS.

This sequence belongs to the ABC transporter superfamily. Thiamine importer (TC 3.A.1.19.1) family. In terms of assembly, the complex is composed of two ATP-binding proteins (ThiQ), two transmembrane proteins (ThiP) and a solute-binding protein (ThiB).

The protein localises to the cell inner membrane. It catalyses the reaction thiamine(out) + ATP + H2O = thiamine(in) + ADP + phosphate + H(+). Functionally, part of the ABC transporter complex ThiBPQ involved in thiamine import. Responsible for energy coupling to the transport system. In Mesorhizobium japonicum (strain LMG 29417 / CECT 9101 / MAFF 303099) (Mesorhizobium loti (strain MAFF 303099)), this protein is Thiamine import ATP-binding protein ThiQ.